The sequence spans 136 residues: Holo-[acyl-carrier-protein] synthase (136 aa).

Mg(2+) contacts are provided by D8 and E57.

It belongs to the P-Pant transferase superfamily. AcpS family. The cofactor is Mg(2+).

The protein localises to the cytoplasm. It catalyses the reaction apo-[ACP] + CoA = holo-[ACP] + adenosine 3',5'-bisphosphate + H(+). Its function is as follows. Transfers the 4'-phosphopantetheine moiety from coenzyme A to a Ser of acyl-carrier-protein. The protein is Holo-[acyl-carrier-protein] synthase of Methylorubrum extorquens (strain PA1) (Methylobacterium extorquens).